Consider the following 57-residue polypeptide: MLKWALIFFVISLIAGFLGFSGISAATAGIAKILFYIAVIIFLVFLVLALAVGGAVT.

2 helical membrane passes run 4–24 and 33–53; these read WALI…SGIS and ILFY…LAVG.

Belongs to the UPF0391 family.

The protein localises to the cell membrane. This is UPF0391 membrane protein Smed_4051 from Sinorhizobium medicae (strain WSM419) (Ensifer medicae).